The following is a 335-amino-acid chain: Lipase chaperone (335 aa).

A helical membrane pass occupies residues 1–21 (MSGSILLLPLAIALGLGFFIA).

This sequence belongs to the lipase chaperone family.

It is found in the cell inner membrane. May be involved in the folding of the extracellular lipase during its passage through the periplasm. This is Lipase chaperone from Stutzerimonas stutzeri (strain A1501) (Pseudomonas stutzeri).